Reading from the N-terminus, the 355-residue chain is Protein MxiC (355 aa).

The protein localises to the secreted. The protein resides in the host cell. Necessary for the secretion of IPA invasins. The protein is Protein MxiC (mxiC) of Shigella flexneri.